The primary structure comprises 641 residues: Bilirubin reductase (641 aa).

An FMN-binding site is contributed by glutamine 96. Arginine 167 acts as the Proton donor in catalysis. Residues lysine 214, arginine 295, and 317-318 each bind FMN; that span reads GR. Cysteine 341, cysteine 344, cysteine 348, and cysteine 360 together coordinate [4Fe-4S] cluster. 5 residues coordinate FAD: alanine 391, glutamate 410, glutamine 418, lysine 428, and alanine 455.

This sequence in the N-terminal section; belongs to the NADH:flavin oxidoreductase/NADH oxidase family. The cofactor is FAD. Requires FMN as cofactor. It depends on [4Fe-4S] cluster as a cofactor.

It carries out the reaction urobilinogen + 4 A = (4Z,15Z)-bilirubin IXalpha + 4 AH2. The catalysed reaction is urobilinogen + 2 A = (4Z,15Z)-mesobilirubin IXalpha + 2 AH2. It participates in porphyrin-containing compound metabolism; protoheme degradation. In terms of biological role, bilirubin reductase that catalyzes reduction of mesobilirubin and/or bilirubin to urobilinogen, a key step during heme degradation. Urobilinogen then spontaneously degrades into urobilin, which gives urine its distinctive yellow color. This Mediterraneibacter gnavus (strain CC55_001C) protein is Bilirubin reductase.